The following is a 504-amino-acid chain: Cytochrome P450 6a9 (504 aa).

Heme is bound at residue Cys-449.

Belongs to the cytochrome P450 family. Requires heme as cofactor.

It localises to the endoplasmic reticulum membrane. Its subcellular location is the microsome membrane. Its function is as follows. Involved in the metabolism of insect hormones and in the breakdown of synthetic insecticides. The sequence is that of Cytochrome P450 6a9 (Cyp6a9) from Drosophila melanogaster (Fruit fly).